The sequence spans 541 residues: Atlastin (541 aa).

Over 1 to 424 (MGGSAVQVIN…NIFKAARTPA (424 aa)) the chain is Cytoplasmic. The GB1/RHD3-type G domain occupies 35 to 284 (DRFVCVVSVA…LVPMLLAPDN (250 aa)). GDP contacts are provided by arginine 48, lysine 49, glycine 50, lysine 51, and serine 52. The GTP site is built by arginine 48, lysine 49, glycine 50, lysine 51, serine 52, and phenylalanine 53. Serine 52 contributes to the Mg(2+) binding site. Aspartate 121 provides a ligand contact to Mg(2+). GDP-binding residues include arginine 192, aspartate 193, and valine 251. GTP-binding residues include arginine 192, aspartate 193, and valine 251. The interval 322-413 (MLVATAEANH…FTNYQAHNES (92 aa)) is 3HB (three-helix bundle) domain. The segment at 414-422 (KNIFKAART) is linker. The chain crosses the membrane as a helical span at residues 425–445 (VYFACAVIMYILSGIFGLVGL). At 446–448 (YTF) the chain is on the lumenal side. A helical transmembrane segment spans residues 449–469 (ANFCNLVMGVALLTLALWAYI). Residues 470–541 (RYSGELSDFG…NASNGKVKRS (72 aa)) are Cytoplasmic-facing. The residue at position 514 (threonine 514) is a Phosphothreonine.

It belongs to the TRAFAC class dynamin-like GTPase superfamily. GB1/RHD3 GTPase family. GB1 subfamily. In terms of assembly, monomeric and homodimeric. The homodimer, transiently formed by two molecules on opposing membranes, is the active form mediating ER membrane fusion. Interacts with spas; interaction may regulate microtubule dynamics. In terms of tissue distribution, ubiquitously expressed.

Its subcellular location is the endoplasmic reticulum membrane. The protein resides in the golgi apparatus membrane. The catalysed reaction is GTP + H2O = GDP + phosphate + H(+). In terms of biological role, membrane-anchored GTPase that mediates the GTP-dependent fusion of endoplasmic reticulum (ER) membranes, maintaining the continuous ER network. It facilitates the formation of three-way junctions where ER tubules intersect. Two atlastin-1 on neighboring ER tubules bind GTP and form loose homodimers through the GB1/RHD3-type G domains and 3HB regions. Upon GTP hydrolysis, the 3HB regions tighten, pulling the membranes together to drive their fusion. After fusion, the homodimer disassembles upon release of inorganic phosphate (Pi). Subsequently, GDP dissociates, resetting the monomers to a conformation ready for a new fusion cycle. May also regulate more or less directly Golgi biogenesis. May also regulate microtubule polymerization and Golgi biogenesis. Required for dopaminergic neurons survival and the growth of muscles and synapses at neuromuscular junctions. The sequence is that of Atlastin (atl) from Drosophila melanogaster (Fruit fly).